Reading from the N-terminus, the 385-residue chain is V-type proton ATPase subunit C (385 aa).

It belongs to the V-ATPase C subunit family. V-ATPase is a heteromultimeric enzyme made up of two complexes: the ATP-hydrolytic V1 complex and the proton translocation V0 complex. The V1 complex consists of three catalytic AB heterodimers that form a heterohexamer, three peripheral stalks each consisting of EG heterodimers, one central rotor including subunits D and F, and the regulatory subunits C and H. The proton translocation complex V0 consists of the proton transport subunit a, a ring of proteolipid subunits c9c'', rotary subunit d, subunits e and f, and the accessory subunits VhaAC45 and ATP6AP2.

Functionally, subunit of the V1 complex of vacuolar(H+)-ATPase (V-ATPase), a multisubunit enzyme composed of a peripheral complex (V1) that hydrolyzes ATP and a membrane integral complex (V0) that translocates protons. V-ATPase is responsible for acidifying and maintaining the pH of intracellular compartments and in some cell types, is targeted to the plasma membrane, where it is responsible for acidifying the extracellular environment. Subunit C is necessary for the assembly of the catalytic sector of the enzyme and is likely to have a specific function in its catalytic activity. The chain is V-type proton ATPase subunit C from Manduca sexta (Tobacco hawkmoth).